A 468-amino-acid polypeptide reads, in one-letter code: Probable xyloglucan galactosyltransferase GT13 (468 aa).

Residues 1-18 (MDKFNPKKEKTVKKRALK) lie on the Cytoplasmic side of the membrane. The helical; Signal-anchor for type II membrane protein transmembrane segment at 19–35 (VLTEISPTPLFSMLFLL) threads the bilayer. Residues 36–468 (HISQIATYLS…RVSLFKMTRI (433 aa)) lie on the Lumenal side of the membrane. N53, N116, N153, N240, and N412 each carry an N-linked (GlcNAc...) asparagine glycan.

The protein belongs to the glycosyltransferase 47 family. As to expression, expressed in roots, hypocotyls, cotyledons, leaves, stems, petals and carpels.

It localises to the golgi apparatus membrane. Functionally, functions in xyloglucan synthesis by adding side chains to the xylosylated glucan backbone. Involved in the galactosylation of hemicellulose xyloglucan. The chain is Probable xyloglucan galactosyltransferase GT13 from Arabidopsis thaliana (Mouse-ear cress).